We begin with the raw amino-acid sequence, 730 residues long: 1,4-alpha-glucan branching enzyme GlgB (730 aa).

Asp-405 (nucleophile) is an active-site residue. Glu-458 functions as the Proton donor in the catalytic mechanism.

This sequence belongs to the glycosyl hydrolase 13 family. GlgB subfamily. Monomer.

The catalysed reaction is Transfers a segment of a (1-&gt;4)-alpha-D-glucan chain to a primary hydroxy group in a similar glucan chain.. Its pathway is glycan biosynthesis; glycogen biosynthesis. Catalyzes the formation of the alpha-1,6-glucosidic linkages in glycogen by scission of a 1,4-alpha-linked oligosaccharide from growing alpha-1,4-glucan chains and the subsequent attachment of the oligosaccharide to the alpha-1,6 position. In Haemophilus influenzae (strain PittGG), this protein is 1,4-alpha-glucan branching enzyme GlgB.